Reading from the N-terminus, the 144-residue chain is Large ribosomal subunit protein uL13 (144 aa).

This sequence belongs to the universal ribosomal protein uL13 family. In terms of assembly, part of the 50S ribosomal subunit.

This protein is one of the early assembly proteins of the 50S ribosomal subunit, although it is not seen to bind rRNA by itself. It is important during the early stages of 50S assembly. The polypeptide is Large ribosomal subunit protein uL13 (Heliobacterium modesticaldum (strain ATCC 51547 / Ice1)).